Reading from the N-terminus, the 189-residue chain is Large ribosomal subunit protein uL5 (189 aa).

The protein belongs to the universal ribosomal protein uL5 family. In terms of assembly, part of the 50S ribosomal subunit; part of the 5S rRNA/L5/L18/L25 subcomplex. Contacts the 5S rRNA and the P site tRNA. Forms a bridge to the 30S subunit in the 70S ribosome.

This is one of the proteins that bind and probably mediate the attachment of the 5S RNA into the large ribosomal subunit, where it forms part of the central protuberance. In the 70S ribosome it contacts protein S13 of the 30S subunit (bridge B1b), connecting the 2 subunits; this bridge is implicated in subunit movement. Contacts the P site tRNA; the 5S rRNA and some of its associated proteins might help stabilize positioning of ribosome-bound tRNAs. This chain is Large ribosomal subunit protein uL5, found in Salinispora tropica (strain ATCC BAA-916 / DSM 44818 / JCM 13857 / NBRC 105044 / CNB-440).